The chain runs to 252 residues: NAC domain-containing protein 23 (252 aa).

The region spanning 12–177 is the NAC domain; that stretch reads MPPGFRFQPT…EMVLCRISNK (166 aa). A DNA-binding region spans residues 110-183; it reads TAVKRRFVFY…ISNKDLPKPP (74 aa). Residues 225–252 form a disordered region; the sequence is VDDAAAADDDPGDLDEEIDDSMQRNHGG. Positions 229-244 are enriched in acidic residues; it reads AAADDDPGDLDEEIDD.

In terms of assembly, forms heterodimers with NAC26. As to expression, expressed in stems and panicles. Expressed in developing seeds.

The protein resides in the nucleus. Its subcellular location is the cytoplasm. Transcription factor involved in the regulation of seed size. Possesses transactivation activity in yeast. The sequence is that of NAC domain-containing protein 23 from Oryza sativa subsp. indica (Rice).